Here is a 233-residue protein sequence, read N- to C-terminus: Chromosome partition protein MukE (233 aa).

A disordered region spans residues 207–233 (SLSLHDESDDADVTMGNAADSVEDEQE).

It belongs to the MukE family. In terms of assembly, interacts, and probably forms a ternary complex, with MukF and MukB. The complex formation is stimulated by calcium or magnesium.

The protein resides in the cytoplasm. The protein localises to the nucleoid. Functionally, involved in chromosome condensation, segregation and cell cycle progression. May participate in facilitating chromosome segregation by condensation DNA from both sides of a centrally located replisome during cell division. Probably acts via its interaction with MukB and MukF. The chain is Chromosome partition protein MukE from Yersinia pestis.